The following is a 166-amino-acid chain: uncharacterized protein (166 aa).

Gly residues-rich tracts occupy residues 1 to 10 (MNYGNNGGGQ) and 76 to 86 (YRGGGGGGGGN). The interval 1–117 (MNYGNNGGGQ…GGGNKNFGPI (117 aa)) is disordered.

This is an uncharacterized protein from Caenorhabditis elegans.